Here is a 245-residue protein sequence, read N- to C-terminus: U21-ctenitoxin-Pn1a (245 aa).

In terms of domain architecture, Peptidase S1 spans 1-245 (IVYGTVTTPG…FRSWMDKVMT (245 aa)). The cysteines at positions 30 and 46 are disulfide-linked. Residues His-45 and Asp-95 each act as charge relay system in the active site. Disulfide bonds link Cys-161–Cys-183 and Cys-192–Cys-221. Ser-196 serves as the catalytic Charge relay system.

As to expression, expressed by the venom gland.

It localises to the secreted. Its function is as follows. Protease. Hydrolyzes gelatin and succinyl casein. The sequence is that of U21-ctenitoxin-Pn1a from Phoneutria nigriventer (Brazilian armed spider).